The primary structure comprises 302 residues: 33 kDa chaperonin (302 aa).

Disulfide bonds link C255–C257 and C288–C291.

The protein belongs to the HSP33 family. Post-translationally, under oxidizing conditions two disulfide bonds are formed involving the reactive cysteines. Under reducing conditions zinc is bound to the reactive cysteines and the protein is inactive.

Its subcellular location is the cytoplasm. Redox regulated molecular chaperone. Protects both thermally unfolding and oxidatively damaged proteins from irreversible aggregation. Plays an important role in the bacterial defense system toward oxidative stress. This is 33 kDa chaperonin from Caulobacter vibrioides (strain ATCC 19089 / CIP 103742 / CB 15) (Caulobacter crescentus).